Consider the following 995-residue polypeptide: ATP-dependent RNA helicase DBP10 (995 aa).

The interval 1-120 is disordered; sequence MAGVQKRKRD…TQTGDDEDDV (120 aa). 2 stretches are compositionally biased toward acidic residues: residues 12-25 and 37-50; these read EDQD…DDIA and SESD…EVEA. Over residues 71–81 the composition is skewed to basic and acidic residues; the sequence is VNNKKKAENKD. Residue S101 is modified to Phosphoserine. The Q motif signature appears at 137–165; it reads GSFPSFGLSKIVLNNIKRKGFRQPTPIQR. A Helicase ATP-binding domain is found at 168–340; the sequence is IPLILQSRDI…KAGLVNPVLV (173 aa). 181–188 lines the ATP pocket; that stretch reads ARTGSGKT. A DEAD box motif is present at residues 288-291; sequence DEAD. 2 disordered regions span residues 389-427 and 889-973; these read LQNS…PAAN and GSRE…EQIR. A phosphoserine mark is found at S398 and S400. Composition is skewed to basic residues over residues 407-422 and 914-924; these read QKKR…RKQK and VRGKFKHKQMK. Positions 418–568 constitute a Helicase C-terminal domain; that stretch reads FRKQKMPAAN…PMYDSLVDVM (151 aa). Over residues 964 to 973 the composition is skewed to basic and acidic residues; sequence SELKSTEQIR.

This sequence belongs to the DEAD box helicase family. DDX54/DBP10 subfamily. As to quaternary structure, interacts with RRP1 and associates with pre-ribosomal particles.

Its subcellular location is the nucleus. The protein localises to the nucleolus. The enzyme catalyses ATP + H2O = ADP + phosphate + H(+). Its function is as follows. ATP-binding RNA helicase involved in the biogenesis of 60S ribosomal subunits and is required for the normal formation of 25S and 5.8S rRNAs. In Saccharomyces cerevisiae (strain ATCC 204508 / S288c) (Baker's yeast), this protein is ATP-dependent RNA helicase DBP10 (DBP10).